Consider the following 330-residue polypeptide: D-alanine--D-alanine ligase (330 aa).

The region spanning 121-321 is the ATP-grasp domain; sequence NHYLKDFGVK…IKDVMTDIIE (201 aa). Residue 149-204 coordinates ATP; the sequence is VTRLGLPIFVKPNDGGSSFGVTKVKEVSAIQPAIAKAFGEGREVILERFIDGTEVT. Aspartate 275, glutamate 288, and asparagine 290 together coordinate Mg(2+).

Belongs to the D-alanine--D-alanine ligase family. Requires Mg(2+) as cofactor. It depends on Mn(2+) as a cofactor.

It is found in the cytoplasm. It carries out the reaction 2 D-alanine + ATP = D-alanyl-D-alanine + ADP + phosphate + H(+). Its pathway is cell wall biogenesis; peptidoglycan biosynthesis. Its function is as follows. Cell wall formation. The chain is D-alanine--D-alanine ligase from Parabacteroides distasonis (strain ATCC 8503 / DSM 20701 / CIP 104284 / JCM 5825 / NCTC 11152).